Reading from the N-terminus, the 120-residue chain is uncharacterized protein (120 aa).

This is an uncharacterized protein from Mycoplasma pneumoniae (strain ATCC 29342 / M129 / Subtype 1) (Mycoplasmoides pneumoniae).